A 255-amino-acid chain; its full sequence is uncharacterized protein (255 aa).

A signal peptide spans 1 to 23 (MKRLNKLVLGISFLFLVISITAG). Cysteine 24 is lipidated: N-palmitoyl cysteine. Residue cysteine 24 is the site of S-diacylglycerol cysteine attachment.

It belongs to the staphylococcal tandem lipoprotein family.

The protein localises to the cell membrane. This is an uncharacterized protein from Staphylococcus aureus (strain N315).